The primary structure comprises 239 residues: tRNA (guanine-N(7)-)-methyltransferase (239 aa).

Positions 69, 94, 121, and 144 each coordinate S-adenosyl-L-methionine. Aspartate 144 is a catalytic residue. A substrate-binding site is contributed by lysine 148. The tract at residues 150–155 is interaction with RNA; the sequence is RHNKRR. Substrate-binding positions include aspartate 180 and 217–220; that span reads TKFE.

This sequence belongs to the class I-like SAM-binding methyltransferase superfamily. TrmB family. As to quaternary structure, monomer.

The catalysed reaction is guanosine(46) in tRNA + S-adenosyl-L-methionine = N(7)-methylguanosine(46) in tRNA + S-adenosyl-L-homocysteine. Its pathway is tRNA modification; N(7)-methylguanine-tRNA biosynthesis. Catalyzes the formation of N(7)-methylguanine at position 46 (m7G46) in tRNA. The protein is tRNA (guanine-N(7)-)-methyltransferase of Salmonella typhimurium (strain LT2 / SGSC1412 / ATCC 700720).